The primary structure comprises 458 residues: Tyrosine phenol-lyase (458 aa).

N6-(pyridoxal phosphate)lysine is present on Lys258.

This sequence belongs to the beta-eliminating lyase family. As to quaternary structure, homotetramer. Pyridoxal 5'-phosphate is required as a cofactor.

The enzyme catalyses L-tyrosine + H2O = phenol + pyruvate + NH4(+). The polypeptide is Tyrosine phenol-lyase (tpl) (Symbiobacterium thermophilum (strain DSM 24528 / JCM 14929 / IAM 14863 / T)).